The sequence spans 955 residues: Protein MEI2-like 3 (955 aa).

The disordered stretch occupies residues 64–83; the sequence is IQPNGANHAGDPETPGGQAF. 2 RRM domains span residues 270 to 343 and 355 to 428; these read RTLV…FSFP and GMLV…LSQH. Disordered stretches follow at residues 436–465 and 897–955; these read RQQHSREWKQDSLPHQPKNSSPGTIGKLGT and NAGD…LEQT. A compositionally biased stretch (polar residues) spans 935–955; that stretch reads DQESNSVGTANSTCRTTLEQT.

Probable RNA-binding protein that may play a role in growth regulation. This Oryza sativa subsp. japonica (Rice) protein is Protein MEI2-like 3 (ML3).